Consider the following 179-residue polypeptide: uncharacterized protein (179 aa).

The segment at 160-179 is disordered; sequence QPIEPNGTQPATETKTPVGV. A compositionally biased stretch (polar residues) spans 165 to 179; the sequence is NGTQPATETKTPVGV.

It belongs to the Dps family.

This is an uncharacterized protein from Anabaena variabilis.